The chain runs to 38 residues: MTKPNPNKQTVELNRTSLYWGLLLIFVLAILFSSYIFN.

Residues 17-37 (SLYWGLLLIFVLAILFSSYIF) form a helical membrane-spanning segment.

This sequence belongs to the PsbL family. PSII is composed of 1 copy each of membrane proteins PsbA, PsbB, PsbC, PsbD, PsbE, PsbF, PsbH, PsbI, PsbJ, PsbK, PsbL, PsbM, PsbT, PsbX, PsbY, PsbZ, Psb30/Ycf12, at least 3 peripheral proteins of the oxygen-evolving complex and a large number of cofactors. It forms dimeric complexes.

It localises to the plastid. It is found in the chloroplast thylakoid membrane. Its function is as follows. One of the components of the core complex of photosystem II (PSII). PSII is a light-driven water:plastoquinone oxidoreductase that uses light energy to abstract electrons from H(2)O, generating O(2) and a proton gradient subsequently used for ATP formation. It consists of a core antenna complex that captures photons, and an electron transfer chain that converts photonic excitation into a charge separation. This subunit is found at the monomer-monomer interface and is required for correct PSII assembly and/or dimerization. This is Photosystem II reaction center protein L from Nephroselmis olivacea (Green alga).